We begin with the raw amino-acid sequence, 946 residues long: MSDNLLSLENPVVPSHYELRLEIDPKQSSPNFKGSAIIHLKFNPNSTTLASIEDSFTQFKLHSKDLIVLSAHATIGSTKFDLKISQDTGKHLSIFNSESPIQLSNDCPLILSVQYVGKIRDIKTHHDKTFGIFKTNFMDRKTGTANNHVVATHCQPFSASNIFPCIDEPSNKSTFQLNIATDAQYKAVSNTPVEMVEALDSSQKHLVKFAKTPLMTTSVFGFSIGDLEFLKTEIKLEGDRTIPVSIYAPWDIANAAFTLDTVQKYLPLLESYFKCPYPLPKLDFVLLPYLSDMAMENFGMITIQLNHLLIPPNALANETVREQAQQLIVHELVHQWMGNYISFDSWESLWFNESFATWLACHILEQNGDLSHYWTSEPYLLQQVEPTMCRDAADVNGRSIFQIAQRNTGIDSQTSDIFDPEAYTKGIIMLRSLQLATGESHLQKGLESVFEDTKTFHARSVKPMDIWNHIGKFLKSQNITNFVSSWTRTPGLPVVKVEVEEKDGKTQTKLTQHRFINQLSTEEKDQLEDVPYQVPLFGVLPDGKMDTKNVLLTDRTLKFDYPILVINHLAQGYYRVSYESEECYALINDKITEETLSEIDLRKIFLDLSQFIGDEGFQNSIHLHGLFKILNHIASPSTKIASKYWDPLSKGLEVLQTIDRASLTSSKLQSFLKKKIVIPLFNKIDWPHGEFDKSTNPHELKVMSQVLFLNKNSAKCAELCQIYFKHLLQGPRSSVPLELVNSILVVVSQHCANIKQWKKIFDLVKRSSCTGITNHVINMYDQNSSETAMLIQNGAIESLGFCLDSDIVKKTLNFITSNIESEGMELALFGFNYNFKKRLNKNEKPQDQVVRETIWEWYMGNFDQWARKATRKGTTTGDHLHKALRSISLIIFQMFVADEPQKIEKFINLEKEKLGQSLLSLDDIWASVQQDEESRKTIRRDLASLV.

Ser2 carries the post-translational modification N-acetylserine. Position 293–297 (293–297 (MAMEN)) interacts with substrate. His330 serves as a coordination point for Zn(2+). Glu331 acts as the Proton acceptor in catalysis. Residues His334 and Glu353 each coordinate Zn(2+).

Belongs to the peptidase M1 family. In terms of assembly, associates with ribosomal complexes. Zn(2+) is required as a cofactor.

The protein localises to the cytoplasm. Functionally, putative zinc aminopeptidase which may be involved in ribosome biogenesis. The sequence is that of Protein TMA108 (TMA108) from Saccharomyces cerevisiae (strain ATCC 204508 / S288c) (Baker's yeast).